The chain runs to 479 residues: Aspartyl/glutamyl-tRNA(Asn/Gln) amidotransferase subunit B (479 aa).

This sequence belongs to the GatB/GatE family. GatB subfamily. In terms of assembly, heterotrimer of A, B and C subunits.

The catalysed reaction is L-glutamyl-tRNA(Gln) + L-glutamine + ATP + H2O = L-glutaminyl-tRNA(Gln) + L-glutamate + ADP + phosphate + H(+). It catalyses the reaction L-aspartyl-tRNA(Asn) + L-glutamine + ATP + H2O = L-asparaginyl-tRNA(Asn) + L-glutamate + ADP + phosphate + 2 H(+). Allows the formation of correctly charged Asn-tRNA(Asn) or Gln-tRNA(Gln) through the transamidation of misacylated Asp-tRNA(Asn) or Glu-tRNA(Gln) in organisms which lack either or both of asparaginyl-tRNA or glutaminyl-tRNA synthetases. The reaction takes place in the presence of glutamine and ATP through an activated phospho-Asp-tRNA(Asn) or phospho-Glu-tRNA(Gln). This chain is Aspartyl/glutamyl-tRNA(Asn/Gln) amidotransferase subunit B, found in Streptococcus pyogenes serotype M12 (strain MGAS2096).